The sequence spans 167 residues: 3-isopropylmalate dehydratase small subunit (167 aa).

It belongs to the LeuD family. LeuD type 2 subfamily. As to quaternary structure, heterodimer of LeuC and LeuD.

It catalyses the reaction (2R,3S)-3-isopropylmalate = (2S)-2-isopropylmalate. Its pathway is amino-acid biosynthesis; L-leucine biosynthesis; L-leucine from 3-methyl-2-oxobutanoate: step 2/4. Functionally, catalyzes the isomerization between 2-isopropylmalate and 3-isopropylmalate, via the formation of 2-isopropylmaleate. The polypeptide is 3-isopropylmalate dehydratase small subunit (Wolinella succinogenes (strain ATCC 29543 / DSM 1740 / CCUG 13145 / JCM 31913 / LMG 7466 / NCTC 11488 / FDC 602W) (Vibrio succinogenes)).